The primary structure comprises 396 residues: Peroxisome proliferator-activated receptor delta (396 aa).

The disordered stretch occupies residues 1 to 24 (MKEEIPPRSPILDEQPSTPLEHQE). The span at 15-24 (QPSTPLEHQE) shows a compositional bias: polar residues. A DNA-binding region (nuclear receptor) is located at residues 28–102 (SVDCKICGDR…LGMSHNAIRF (75 aa)). NR C4-type zinc fingers lie at residues 31-51 (CKIC…CEGC) and 68-90 (CDRN…FNKC). The region spanning 166-394 (FVIHDMDTLW…HPLLQEIYRD (229 aa)) is the NR LBD domain.

Belongs to the nuclear hormone receptor family. NR1 subfamily. In terms of assembly, heterodimer with the retinoid X receptor. 'Lys-48'-linked polyubiquitinated; leading to proteasomal degradation. Deubiquitinated and stabilized by OTUD3. As to expression, ubiquitous.

It localises to the nucleus. Its function is as follows. Ligand-activated transcription factor key mediator of energy metabolism in adipose tissues. Receptor that binds peroxisome proliferators such as hypolipidemic drugs and fatty acids. Has a preference for poly-unsaturated fatty acids, such as gamma-linoleic acid and eicosapentanoic acid. Once activated by a ligand, the receptor binds to promoter elements of target genes. Regulates the peroxisomal beta-oxidation pathway of fatty acids. Functions as a transcription activator for the acyl-CoA oxidase gene. Decreases expression of NPC1L1 once activated by a ligand. The sequence is that of Peroxisome proliferator-activated receptor delta (ppard) from Xenopus laevis (African clawed frog).